The sequence spans 466 residues: Integrator complex subunit 12 (466 aa).

The disordered stretch occupies residues 41–101 (KGNDSVYRPQ…EAEKRSADKM (61 aa)). The span at 69-84 (KASSSTPSSSMLSKPL) shows a compositional bias: low complexity. Basic and acidic residues predominate over residues 85–101 (TSEKLKKEAEKRSADKM). A PHD-type zinc finger spans residues 156-212 (GLACVVCRQMTVFSGNQLVECQECHNLYHQDCHKPQVTDKDVNDPRLVWYCARCTRQ). 2 disordered regions span residues 216–251 (MAQK…ELKA) and 311–466 (GTSS…KLKK). Polar residues-rich tracts occupy residues 218-233 (QKNQ…SAVS) and 311-329 (GTSS…SVQK). The span at 338–373 (PSKPGSVSKSGSGGSSSSSTIPIKPLPPLILGKTGL) shows a compositional bias: low complexity. Positions 374–386 (SRSMSSDNVSKTG) are enriched in polar residues. The segment covering 392-423 (PSSAGSVSSLSSQLGSNNGSSSAAGSNVTSSN) has biased composition (low complexity). The span at 453–466 (QMVKKKAAQKKLKK) shows a compositional bias: basic residues.

The protein belongs to the Integrator subunit 12 family. In terms of assembly, component of the Integrator complex, composed of core subunits INTS1, INTS2, INTS3, INTS4, INTS5, INTS6, INTS7, INTS8, INTS9/RC74, INTS10, INTS11/CPSF3L, INTS12, INTS13, INTS14 and INTS15. The core complex associates with protein phosphatase 2A subunits PPP2CA and PPP2R1A, to form the Integrator-PP2A (INTAC) complex.

It is found in the nucleus. Functionally, component of the integrator complex, a multiprotein complex that terminates RNA polymerase II (Pol II) transcription in the promoter-proximal region of genes. The integrator complex provides a quality checkpoint during transcription elongation by driving premature transcription termination of transcripts that are unfavorably configured for transcriptional elongation: the complex terminates transcription by (1) catalyzing dephosphorylation of the C-terminal domain (CTD) of Pol II subunit POLR2A/RPB1 and SUPT5H/SPT5, (2) degrading the exiting nascent RNA transcript via endonuclease activity and (3) promoting the release of Pol II from bound DNA. The integrator complex is also involved in terminating the synthesis of non-coding Pol II transcripts, such as enhancer RNAs (eRNAs), small nuclear RNAs (snRNAs), telomerase RNAs and long non-coding RNAs (lncRNAs). In Xenopus tropicalis (Western clawed frog), this protein is Integrator complex subunit 12 (ints12).